The sequence spans 119 residues: Tubulin-specific chaperone A (119 aa).

The protein belongs to the TBCA family. In terms of assembly, supercomplex made of cofactors A to E. Cofactors A and D function by capturing and stabilizing tubulin in a quasi-native conformation. Cofactor E binds to the cofactor D-tubulin complex; interaction with cofactor C then causes the release of tubulin polypeptides that are committed to the native state.

Its subcellular location is the cytoplasm. It is found in the cytoskeleton. Required for the maintenance of microtubule structures and cell polarity. Beta-tubulin-folding protein; may have a regulatory role in the tubulin-folding pathway. The chain is Tubulin-specific chaperone A (alp31) from Schizosaccharomyces pombe (strain 972 / ATCC 24843) (Fission yeast).